The chain runs to 543 residues: Oligopeptide-binding protein AppA (543 aa).

The N-terminal stretch at 1–23 (MKRRKTALMMLSVLMVLAIFLSA) is a signal peptide. The N-palmitoyl cysteine moiety is linked to residue Cys24. Cys24 carries S-diacylglycerol cysteine lipidation.

This sequence belongs to the bacterial solute-binding protein 5 family.

The protein resides in the cell membrane. This protein is a component of an oligopeptide permease, a binding protein-dependent transport system. This APP system can completely substitute for the OPP system in both sporulation and genetic competence. AppA can bind and transport tetra- and pentapeptides but not tripeptides. This chain is Oligopeptide-binding protein AppA (appA), found in Bacillus subtilis (strain 168).